A 640-amino-acid polypeptide reads, in one-letter code: Threonine--tRNA ligase (640 aa).

Positions 1–61 constitute a TGS domain; it reads MPIITLPDGN…EKDSEVNIIT (61 aa). Residues 242-533 are catalytic; that stretch reads DHRRIAKQMS…LIEHYAGRMP (292 aa). 3 residues coordinate Zn(2+): cysteine 333, histidine 384, and histidine 510.

This sequence belongs to the class-II aminoacyl-tRNA synthetase family. Homodimer. Zn(2+) is required as a cofactor.

The protein resides in the cytoplasm. It carries out the reaction tRNA(Thr) + L-threonine + ATP = L-threonyl-tRNA(Thr) + AMP + diphosphate + H(+). In terms of biological role, catalyzes the attachment of threonine to tRNA(Thr) in a two-step reaction: L-threonine is first activated by ATP to form Thr-AMP and then transferred to the acceptor end of tRNA(Thr). Also edits incorrectly charged L-seryl-tRNA(Thr). The polypeptide is Threonine--tRNA ligase (Prochlorococcus marinus (strain MIT 9303)).